A 350-amino-acid chain; its full sequence is Biotin synthase (350 aa).

The Radical SAM core domain occupies 41–268; the sequence is NEVQISRLLS…LSRVRLSAGR (228 aa). Positions 56, 60, and 63 each coordinate [4Fe-4S] cluster. Residues Cys-100, Cys-131, Cys-191, and Arg-263 each coordinate [2Fe-2S] cluster.

The protein belongs to the radical SAM superfamily. Biotin synthase family. In terms of assembly, homodimer. It depends on [4Fe-4S] cluster as a cofactor. The cofactor is [2Fe-2S] cluster.

It carries out the reaction (4R,5S)-dethiobiotin + (sulfur carrier)-SH + 2 reduced [2Fe-2S]-[ferredoxin] + 2 S-adenosyl-L-methionine = (sulfur carrier)-H + biotin + 2 5'-deoxyadenosine + 2 L-methionine + 2 oxidized [2Fe-2S]-[ferredoxin]. Its pathway is cofactor biosynthesis; biotin biosynthesis; biotin from 7,8-diaminononanoate: step 2/2. Functionally, catalyzes the conversion of dethiobiotin (DTB) to biotin by the insertion of a sulfur atom into dethiobiotin via a radical-based mechanism. The chain is Biotin synthase from Shewanella putrefaciens (strain CN-32 / ATCC BAA-453).